A 266-amino-acid chain; its full sequence is Electron transfer flavoprotein subunit beta (266 aa).

The protein belongs to the ETF beta-subunit/FixA family. As to quaternary structure, heterodimer of an alpha and a beta subunit. The cofactor is FAD. Requires AMP as cofactor.

Functionally, the electron transfer flavoprotein serves as a specific electron acceptor for other dehydrogenases. It transfers the electrons to the main respiratory chain via ETF-ubiquinone oxidoreductase (ETF dehydrogenase). This Mycobacterium leprae (strain TN) protein is Electron transfer flavoprotein subunit beta (etfB).